The following is a 496-amino-acid chain: NADH-quinone oxidoreductase subunit N (496 aa).

Transmembrane regions (helical) follow at residues 16–36 (SLSP…VGAI), 46–66 (CVFC…FNGL), 79–99 (ISII…PLAL), 116–136 (FLFM…LIIF), 166–186 (FAMG…FYLA), 208–228 (LIIL…LSLI), 245–267 (LAGY…IFAM), 278–298 (DMLY…ALVQ), 304–324 (MLAF…VANS), 331–351 (LFFY…MLWV), 382–402 (AVIM…SVFW), 422–442 (IIMI…VFMF), and 464–484 (VIVG…GAIL).

This sequence belongs to the complex I subunit 2 family. NDH-1 is composed of 14 different subunits. Subunits NuoA, H, J, K, L, M, N constitute the membrane sector of the complex.

It localises to the cell inner membrane. The catalysed reaction is a quinone + NADH + 5 H(+)(in) = a quinol + NAD(+) + 4 H(+)(out). In terms of biological role, NDH-1 shuttles electrons from NADH, via FMN and iron-sulfur (Fe-S) centers, to quinones in the respiratory chain. The immediate electron acceptor for the enzyme in this species is believed to be ubiquinone. Couples the redox reaction to proton translocation (for every two electrons transferred, four hydrogen ions are translocated across the cytoplasmic membrane), and thus conserves the redox energy in a proton gradient. The chain is NADH-quinone oxidoreductase subunit N from Campylobacter concisus (strain 13826).